A 599-amino-acid chain; its full sequence is uncharacterized protein (599 aa).

Residues 1-13 (MSSSSSHNSFSGS) show a composition bias toward low complexity. Disordered regions lie at residues 1–27 (MSSS…IDGL) and 41–86 (YPSN…DDTN). The span at 14-27 (KTNAAEGQNSIDGL) shows a compositional bias: polar residues. Over residues 44 to 70 (NEEKEVKETDIVPDENKVNELDVHKQS) the composition is skewed to basic and acidic residues. 14 helical membrane-spanning segments follow: residues 97 to 117 (IVVP…TIVT), 135 to 155 (WIGS…GVFC), 162 to 182 (IVLY…GASQ), 192 to 212 (AIQG…ISDI), 223 to 243 (GILA…GGAI), 251 to 271 (WIFF…VVFL), 290 to 310 (FIGL…ISLG), 321 to 341 (ILCY…YDTF), 359 to 379 (AALL…AYYV), 396 to 416 (VHTI…GMVL), 423 to 443 (LPLI…MICV), 452 to 472 (VMGL…PPLI), 489 to 509 (TLMF…EVIF), and 552 to 572 (VIWI…FFIK).

The protein belongs to the major facilitator superfamily. TCR/Tet family.

It is found in the membrane. This is an uncharacterized protein from Schizosaccharomyces pombe (strain 972 / ATCC 24843) (Fission yeast).